Here is a 183-residue protein sequence, read N- to C-terminus: DELTA-miturgitoxin-Cp1b (183 aa).

A signal peptide spans 1 to 20 (MKFSLFFSVFFLAVLHACLS). Positions 21–47 (ESEIDLEDEEHFMSSDSFLSEIQDESR) are excised as a propeptide. Positions 44–47 (DESR) match the Processing quadruplet motif motif. 8 disulfide bridges follow: Cys-51–Cys-66, Cys-58–Cys-75, Cys-65–Cys-88, Cys-77–Cys-86, Cys-115–Cys-130, Cys-122–Cys-139, Cys-129–Cys-157, and Cys-141–Cys-155. A predicted alpha-helix region spans residues 164-177 (QAIEGALRIAKKLI). Trp-181 carries the tryptophan amide modification.

It belongs to the neurotoxin 19 (CSTX) family. Double-CSTX subfamily. In terms of processing, cleavage of the propeptide depends on the processing quadruplet motif (XXXR, with at least one of X being E). As to expression, expressed by the venom gland.

Its subcellular location is the secreted. The protein resides in the target cell membrane. Its function is as follows. Spider venom toxin that exhibits cytolytic activity by forming an alpha-helix across the membrane. Lethal to insect larvae. Causes instant paralysis and death in the larvae of the flesh fly (S.carnaria) at doses of 20 ug/g, at doses of less than 10 ug/g causes reversible paralysis. Has cytolytic activity against insect Sf9 cells. Causes stable and irreversible depolarization of fly muscle fibers, leading to contracture at higher toxin concentrations. Destabilizes membranes. This Cheiracanthium punctorium (Yellow sac spider) protein is DELTA-miturgitoxin-Cp1b.